Consider the following 190-residue polypeptide: Guanylate kinase (190 aa).

The Guanylate kinase-like domain maps to 3–185; the sequence is NYIFIVSAPS…SLEQFCKYFE (183 aa). Residue 10-17 participates in ATP binding; that stretch reads APSGAGKS.

It belongs to the guanylate kinase family.

Its subcellular location is the cytoplasm. It catalyses the reaction GMP + ATP = GDP + ADP. Functionally, essential for recycling GMP and indirectly, cGMP. This is Guanylate kinase from Francisella tularensis subsp. tularensis (strain FSC 198).